The following is a 38-amino-acid chain: Photosystem II reaction center protein M (38 aa).

Residues 7–27 (GFVASILFVLVPSVFLIILYI) form a helical membrane-spanning segment.

The protein belongs to the PsbM family. PSII is composed of 1 copy each of membrane proteins PsbA, PsbB, PsbC, PsbD, PsbE, PsbF, PsbH, PsbI, PsbJ, PsbK, PsbL, PsbM, PsbT, PsbX, PsbY, PsbZ, Psb30/Ycf12, peripheral proteins PsbO, CyanoQ (PsbQ), PsbU, PsbV and a large number of cofactors. It forms dimeric complexes.

Its subcellular location is the cellular thylakoid membrane. Its function is as follows. One of the components of the core complex of photosystem II (PSII). PSII is a light-driven water:plastoquinone oxidoreductase that uses light energy to abstract electrons from H(2)O, generating O(2) and a proton gradient subsequently used for ATP formation. It consists of a core antenna complex that captures photons, and an electron transfer chain that converts photonic excitation into a charge separation. This subunit is found at the monomer-monomer interface. In Nostoc sp. (strain PCC 7120 / SAG 25.82 / UTEX 2576), this protein is Photosystem II reaction center protein M.